Here is a 248-residue protein sequence, read N- to C-terminus: Probable transcriptional regulator LumQ (248 aa).

The HTH araC/xylS-type domain occupies 148 to 246 (VLIDNYIEQH…GMSPTRYQFF (99 aa)). 2 DNA-binding regions (H-T-H motif) span residues 165 to 186 (AELSSVAFLAQSQFYALFKSQM) and 213 to 236 (LSQVAQLCGFSSQSSFSQAFRRLY).

Probable transcriptional regulator. Its target gene(s) is not yet known. The protein is Probable transcriptional regulator LumQ (lumQ) of Photobacterium leiognathi.